The following is a 248-amino-acid chain: Ribosomal RNA small subunit methyltransferase J (248 aa).

Residues 101 to 102 (RD), 117 to 118 (ER), 153 to 154 (SS), and D171 each bind S-adenosyl-L-methionine.

The protein belongs to the methyltransferase superfamily. RsmJ family.

The protein localises to the cytoplasm. The enzyme catalyses guanosine(1516) in 16S rRNA + S-adenosyl-L-methionine = N(2)-methylguanosine(1516) in 16S rRNA + S-adenosyl-L-homocysteine + H(+). Its function is as follows. Specifically methylates the guanosine in position 1516 of 16S rRNA. The sequence is that of Ribosomal RNA small subunit methyltransferase J from Proteus mirabilis (strain HI4320).